Reading from the N-terminus, the 516-residue chain is Pickpocket protein 11 (516 aa).

2 helical membrane passes run 117–137 and 454–474; these read ILWWLLICNAVLLSFTLVIMS and FIGTFGGITGLFMGCSFVSVF.

It belongs to the amiloride-sensitive sodium channel (TC 1.A.6) family. Expressed in embryonic and larval tracheal systems in the dorsal trunk and transverse connective (TC), but not in the junction between the dorsal trunk and TC, and in several tracheal branches and terminal cells. In larvae, also expressed in ventral pits. Expressed in the taste-sensing terminal organ of the larval head. In adult, expressed in hairs on the tibia, femur, tarsi of the leg and wing margin.

The protein resides in the membrane. Functionally, part of a complex that plays a role in tracheal liquid clearance. In both larvae and adults, contributes to the behavioral response to salt. Probable role in sodium transport. This chain is Pickpocket protein 11 (ppk11), found in Drosophila melanogaster (Fruit fly).